The sequence spans 449 residues: F-box/LRR-repeat protein At3g60040 (449 aa).

The 53-residue stretch at 12–64 (RDAISWLPDEVLGKILSLIPTKQAVSTSLLAKKWRTIFRLVDHLELDDSFSLQ) folds into the F-box domain. LRR repeat units lie at residues 161–188 (LTLGTQLCLGQLPSYVSLPSLKSLFIDT), 191–215 (FYDIEDLCCVLLAGCPVLEELSVHH), 216–237 (HDFIATPHTISSPTLKRLSVDY), 239–263 (CPDDVDSASHMSFDLPKLVYLEYSH), 287–312 (ERKVLRMDVTDLIIGIRNVQSLHLSP), and 340–365 (KNKRGWRLLANLLKQSTKLETLIVKD).

In Arabidopsis thaliana (Mouse-ear cress), this protein is F-box/LRR-repeat protein At3g60040.